The sequence spans 82 residues: MKLTCVMIVAVLFLIAWTFVTADDSRNGLKNLFPKARHEMKNPEASKLNKRDGCSSGGTFCGIRPGLCCSEFCFLWCITFID.

The N-terminal stretch at 1-22 (MKLTCVMIVAVLFLIAWTFVTA) is a signal peptide. Residues 23–49 (DDSRNGLKNLFPKARHEMKNPEASKLN) constitute a propeptide that is removed on maturation. 3 disulfides stabilise this stretch: C54–C69, C61–C73, and C68–C77. The residue at position 65 (P65) is a 4-hydroxyproline.

This sequence belongs to the conotoxin O1 superfamily. In terms of tissue distribution, expressed by the venom duct.

It is found in the secreted. Delta-conotoxins bind to site 6 of voltage-gated sodium channels (Nav) and inhibit the inactivation process. This Conus stercusmuscarum (Fly-specked cone) protein is Delta-conotoxin-like SmVIA.